The primary structure comprises 478 residues: ATP synthase subunit beta (478 aa).

160-167 serves as a coordination point for ATP; it reads GGAGVGKT.

Belongs to the ATPase alpha/beta chains family. F-type ATPases have 2 components, CF(1) - the catalytic core - and CF(0) - the membrane proton channel. CF(1) has five subunits: alpha(3), beta(3), gamma(1), delta(1), epsilon(1). CF(0) has three main subunits: a(1), b(2) and c(9-12). The alpha and beta chains form an alternating ring which encloses part of the gamma chain. CF(1) is attached to CF(0) by a central stalk formed by the gamma and epsilon chains, while a peripheral stalk is formed by the delta and b chains.

Its subcellular location is the cell inner membrane. The enzyme catalyses ATP + H2O + 4 H(+)(in) = ADP + phosphate + 5 H(+)(out). Its function is as follows. Produces ATP from ADP in the presence of a proton gradient across the membrane. The catalytic sites are hosted primarily by the beta subunits. This is ATP synthase subunit beta from Orientia tsutsugamushi (strain Boryong) (Rickettsia tsutsugamushi).